The chain runs to 513 residues: Histidine ammonia-lyase (513 aa).

The segment at residues 143–145 is a cross-link (5-imidazolinone (Ala-Gly)); sequence ASG. 2,3-didehydroalanine (Ser) is present on S144.

Belongs to the PAL/histidase family. Contains an active site 4-methylidene-imidazol-5-one (MIO), which is formed autocatalytically by cyclization and dehydration of residues Ala-Ser-Gly.

It localises to the cytoplasm. It carries out the reaction L-histidine = trans-urocanate + NH4(+). Its pathway is amino-acid degradation; L-histidine degradation into L-glutamate; N-formimidoyl-L-glutamate from L-histidine: step 1/3. This chain is Histidine ammonia-lyase, found in Xanthomonas axonopodis pv. citri (strain 306).